Reading from the N-terminus, the 257-residue chain is MIGRERMTVASQRLIAERTYELTLSGRLVQEMRQPGQFVHVKVAASADPLLRRPLSLCHIDHKQGQCTIIYRQEGKGTALLAQKQPGDTVDVLGPLGNGFPLEAAPAGSRALLVGGGIGVPPLYELAKQLTKRGVKVVSVLGFQTKAAVFYEEEFAAFGETHVATDDGSHGTAGRVTDVIEARSLEFDVLYACGPKPMLRALAERFPNRPVYLSLEERMGCGVGACFACVCHVPGSETAYKKVCSDGPVFRAGEVVL.

The 101-residue stretch at 2–102 (IGRERMTVAS…LGPLGNGFPL (101 aa)) folds into the FAD-binding FR-type domain. FAD is bound by residues 53 to 56 (RPLS), 70 to 72 (IYR), and 77 to 78 (GT). Residues cysteine 221, cysteine 226, cysteine 229, and cysteine 244 each contribute to the [2Fe-2S] cluster site.

This sequence belongs to the PyrK family. As to quaternary structure, heterotetramer of 2 PyrK and 2 PyrD type B subunits. [2Fe-2S] cluster is required as a cofactor. It depends on FAD as a cofactor.

The protein operates within pyrimidine metabolism; UMP biosynthesis via de novo pathway; orotate from (S)-dihydroorotate (NAD(+) route): step 1/1. Its function is as follows. Responsible for channeling the electrons from the oxidation of dihydroorotate from the FMN redox center in the PyrD type B subunit to the ultimate electron acceptor NAD(+). The polypeptide is Dihydroorotate dehydrogenase B (NAD(+)), electron transfer subunit (Bacillus caldolyticus).